The following is a 442-amino-acid chain: Tubby-related protein 3 (442 aa).

The segment at Met23–Gln68 is required for association with the IFT complex A (IFT-A). The interval Pro101–Pro177 is disordered. A compositionally biased stretch (polar residues) spans Gly145–Asn162. Low complexity predominate over residues Ser163–Ala175.

Belongs to the TUB family. As to quaternary structure, associates with the IFT complex A (IFT-A). Interacts with SIRT1. As to expression, expressed at high levels in testis, ovaries, thyroid, and spinal cord.

Its subcellular location is the nucleus. It is found in the cell membrane. The protein resides in the cell projection. The protein localises to the cilium. It localises to the cytoplasm. Its subcellular location is the secreted. Functionally, negative regulator of the Shh signaling transduction pathway: recruited to primary cilia via association with the IFT complex A (IFT-A) and is required for recruitment of G protein-coupled receptor GPR161 to cilia, a promoter of PKA-dependent basal repression machinery in Shh signaling. Binds to phosphorylated inositide (phosphoinositide) lipids. Both IFT-A- and phosphoinositide-binding properties are required to regulate ciliary G protein-coupled receptor trafficking. During adipogenesis, regulates ciliary trafficking of FFAR4 in preadipocytes. The polypeptide is Tubby-related protein 3 (Homo sapiens (Human)).